Here is a 355-residue protein sequence, read N- to C-terminus: 3-dehydroquinate synthase (355 aa).

NAD(+)-binding positions include 71-76 (EGEASK), 105-109 (GVVGD), 129-130 (TS), Lys-142, Lys-151, and 169-172 (TLKT). Glu-184, His-246, and His-263 together coordinate Zn(2+).

Belongs to the sugar phosphate cyclases superfamily. Dehydroquinate synthase family. Co(2+) serves as cofactor. Zn(2+) is required as a cofactor. The cofactor is NAD(+).

The protein localises to the cytoplasm. It carries out the reaction 7-phospho-2-dehydro-3-deoxy-D-arabino-heptonate = 3-dehydroquinate + phosphate. It participates in metabolic intermediate biosynthesis; chorismate biosynthesis; chorismate from D-erythrose 4-phosphate and phosphoenolpyruvate: step 2/7. In terms of biological role, catalyzes the conversion of 3-deoxy-D-arabino-heptulosonate 7-phosphate (DAHP) to dehydroquinate (DHQ). This is 3-dehydroquinate synthase from Streptococcus suis (strain 98HAH33).